A 920-amino-acid chain; its full sequence is Isoleucine--tRNA ligase (920 aa).

The 'HIGH' region motif lies at 58–68 (PYANGHLHLGH). An L-isoleucyl-5'-AMP-binding site is contributed by Glu569. Residues 610–614 (KMSKS) carry the 'KMSKS' region motif. Lys613 is a binding site for ATP. Cys895, Cys898, Cys910, and Cys913 together coordinate Zn(2+).

It belongs to the class-I aminoacyl-tRNA synthetase family. IleS type 1 subfamily. As to quaternary structure, monomer. Zn(2+) serves as cofactor.

Its subcellular location is the cytoplasm. It carries out the reaction tRNA(Ile) + L-isoleucine + ATP = L-isoleucyl-tRNA(Ile) + AMP + diphosphate. Its function is as follows. Catalyzes the attachment of isoleucine to tRNA(Ile). As IleRS can inadvertently accommodate and process structurally similar amino acids such as valine, to avoid such errors it has two additional distinct tRNA(Ile)-dependent editing activities. One activity is designated as 'pretransfer' editing and involves the hydrolysis of activated Val-AMP. The other activity is designated 'posttransfer' editing and involves deacylation of mischarged Val-tRNA(Ile). The sequence is that of Isoleucine--tRNA ligase from Helicobacter pylori (strain Shi470).